Here is a 509-residue protein sequence, read N- to C-terminus: tRNA-2-methylthio-N(6)-dimethylallyladenosine synthase (509 aa).

A disordered region spans residues 1 to 21; that stretch reads MNEKQRIESGQVNPSDKKSEK. The MTTase N-terminal domain maps to 66-184; the sequence is RKFYIRTYGC…LPELLSEAYL (119 aa). Positions 75, 111, 145, 221, 225, and 228 each coordinate [4Fe-4S] cluster. The Radical SAM core domain maps to 207–437; it reads RTGKIKGWVN…NEVVNEISAK (231 aa). The TRAM domain occupies 440 to 503; it reads KEYEGQVVEV…TWSLDGEMVG (64 aa).

The protein belongs to the methylthiotransferase family. MiaB subfamily. Monomer. It depends on [4Fe-4S] cluster as a cofactor.

The protein localises to the cytoplasm. The catalysed reaction is N(6)-dimethylallyladenosine(37) in tRNA + (sulfur carrier)-SH + AH2 + 2 S-adenosyl-L-methionine = 2-methylsulfanyl-N(6)-dimethylallyladenosine(37) in tRNA + (sulfur carrier)-H + 5'-deoxyadenosine + L-methionine + A + S-adenosyl-L-homocysteine + 2 H(+). Functionally, catalyzes the methylthiolation of N6-(dimethylallyl)adenosine (i(6)A), leading to the formation of 2-methylthio-N6-(dimethylallyl)adenosine (ms(2)i(6)A) at position 37 in tRNAs that read codons beginning with uridine. This chain is tRNA-2-methylthio-N(6)-dimethylallyladenosine synthase, found in Bacillus licheniformis (strain ATCC 14580 / DSM 13 / JCM 2505 / CCUG 7422 / NBRC 12200 / NCIMB 9375 / NCTC 10341 / NRRL NRS-1264 / Gibson 46).